The sequence spans 348 residues: Dihydroorotase (348 aa).

Zn(2+)-binding residues include His-14 and His-16. Residues 16–18 (HLR) and Asn-42 each bind substrate. Zn(2+) is bound by residues Lys-100, His-137, and His-175. N6-carboxylysine is present on Lys-100. His-137 is a binding site for substrate. Substrate is bound at residue Leu-220. A Zn(2+)-binding site is contributed by Asp-248. The active site involves Asp-248. Substrate-binding residues include His-252 and Ala-264.

The protein belongs to the metallo-dependent hydrolases superfamily. DHOase family. Class II DHOase subfamily. Homodimer. Requires Zn(2+) as cofactor.

It catalyses the reaction (S)-dihydroorotate + H2O = N-carbamoyl-L-aspartate + H(+). It participates in pyrimidine metabolism; UMP biosynthesis via de novo pathway; (S)-dihydroorotate from bicarbonate: step 3/3. In terms of biological role, catalyzes the reversible cyclization of carbamoyl aspartate to dihydroorotate. This is Dihydroorotase from Azotobacter vinelandii (strain DJ / ATCC BAA-1303).